Reading from the N-terminus, the 180-residue chain is UPF0340 protein YwlG (180 aa).

This sequence belongs to the UPF0340 family.

This chain is UPF0340 protein YwlG (ywlG), found in Bacillus subtilis (strain 168).